Here is a 182-residue protein sequence, read N- to C-terminus: Glycerol-3-phosphate acyltransferase 1 (182 aa).

A run of 5 helical transmembrane segments spans residues 5–25 (MQFL…AYIV), 54–74 (GYFV…VSIA), 81–101 (STFL…PILF), 117–137 (IAFD…FYLI), and 157–177 (ILYS…VLIL).

Belongs to the PlsY family. In terms of assembly, probably interacts with PlsX.

The protein localises to the cell membrane. It carries out the reaction an acyl phosphate + sn-glycerol 3-phosphate = a 1-acyl-sn-glycero-3-phosphate + phosphate. The protein operates within lipid metabolism; phospholipid metabolism. Its function is as follows. Catalyzes the transfer of an acyl group from acyl-phosphate (acyl-PO(4)) to glycerol-3-phosphate (G3P) to form lysophosphatidic acid (LPA). This enzyme utilizes acyl-phosphate as fatty acyl donor, but not acyl-CoA or acyl-ACP. This is Glycerol-3-phosphate acyltransferase 1 from Bacillus thuringiensis subsp. konkukian (strain 97-27).